A 346-amino-acid polypeptide reads, in one-letter code: Methionine import ATP-binding protein MetN 1 (346 aa).

Residues 2–241 (IELKNVSKVF…PQHVTTKKFV (240 aa)) form the ABC transporter domain. 38 to 45 (GYSGAGKS) serves as a coordination point for ATP.

The protein belongs to the ABC transporter superfamily. Methionine importer (TC 3.A.1.24) family. In terms of assembly, the complex is composed of two ATP-binding proteins (MetN), two transmembrane proteins (MetI) and a solute-binding protein (MetQ).

Its subcellular location is the cell membrane. The enzyme catalyses L-methionine(out) + ATP + H2O = L-methionine(in) + ADP + phosphate + H(+). The catalysed reaction is D-methionine(out) + ATP + H2O = D-methionine(in) + ADP + phosphate + H(+). Functionally, part of the ABC transporter complex MetNIQ involved in methionine import. Responsible for energy coupling to the transport system. This Bacillus cereus (strain ATCC 10987 / NRS 248) protein is Methionine import ATP-binding protein MetN 1.